A 287-amino-acid polypeptide reads, in one-letter code: Pyridoxal kinase PdxY (287 aa).

Substrate contacts are provided by residues S9 and 44-45 (MQ). Residues D111, A142, E147, and K180 each coordinate ATP. Substrate is bound at residue D221.

It belongs to the pyridoxine kinase family. PdxY subfamily. Homodimer. Mg(2+) serves as cofactor.

The catalysed reaction is pyridoxal + ATP = pyridoxal 5'-phosphate + ADP + H(+). It participates in cofactor metabolism; pyridoxal 5'-phosphate salvage; pyridoxal 5'-phosphate from pyridoxal: step 1/1. Its function is as follows. Pyridoxal kinase involved in the salvage pathway of pyridoxal 5'-phosphate (PLP). Catalyzes the phosphorylation of pyridoxal to PLP. The sequence is that of Pyridoxal kinase PdxY from Burkholderia mallei (strain ATCC 23344).